Consider the following 99-residue polypeptide: DNA-binding protein HU (99 aa).

The interval 67 to 86 (REGRNPKTGAKMKIDAYNQP) is disordered.

It belongs to the bacterial histone-like protein family. As to quaternary structure, homodimer.

Its function is as follows. Histone-like DNA-binding protein which is capable of wrapping DNA to stabilize it, and thus to prevent its denaturation under extreme environmental conditions. This is DNA-binding protein HU (hup) from Rickettsia felis (strain ATCC VR-1525 / URRWXCal2) (Rickettsia azadi).